The following is a 245-amino-acid chain: MAQQLSARQPRYKRILLKLSGEALMGSEEFGIDPKVLDRMALEIGQLVGIGVQVGLVIGGGNLFRGAALSAAGMDRVTGDHMGMLATVMNGLAMRDALERSNIPALVMSAISMVGVTDHYDRRKAMRHLGGGEVVIFSAGTGNPFFTTDSAACLRAIEIDADVVLKATKVDGVYTADPFKDPNAEKFERLTYDEVLDRKLGVMDLTAICLCRDQNMPLRVFNMNKPGALLNIVVGGAEGTLIEEG.

Position 18-21 (18-21) interacts with ATP; sequence KLSG. Position 60 (Gly-60) interacts with UMP. ATP contacts are provided by Gly-61 and Arg-65. Residues Asp-80 and 141-148 contribute to the UMP site; that span reads TGNPFFTT. ATP contacts are provided by Thr-168, Tyr-174, and Asp-177.

It belongs to the UMP kinase family. As to quaternary structure, homohexamer.

Its subcellular location is the cytoplasm. The enzyme catalyses UMP + ATP = UDP + ADP. Its pathway is pyrimidine metabolism; CTP biosynthesis via de novo pathway; UDP from UMP (UMPK route): step 1/1. Inhibited by UTP. Its function is as follows. Catalyzes the reversible phosphorylation of UMP to UDP. In Pseudomonas aeruginosa (strain UCBPP-PA14), this protein is Uridylate kinase.